The primary structure comprises 760 residues: 5-methyltetrahydropteroyltriglutamate--homocysteine methyltransferase (760 aa).

Residues 15-18 (RELK) and Lys114 each bind 5-methyltetrahydropteroyltri-L-glutamate. L-homocysteine-binding positions include 436–438 (IGS) and Glu489. Residues 436–438 (IGS) and Glu489 contribute to the L-methionine site. Residues 520 to 521 (RC) and Trp566 each bind 5-methyltetrahydropteroyltri-L-glutamate. Asp604 lines the L-homocysteine pocket. L-methionine is bound at residue Asp604. Position 610 (Glu610) interacts with 5-methyltetrahydropteroyltri-L-glutamate. 3 residues coordinate Zn(2+): His646, Cys648, and Glu670. Catalysis depends on His699, which acts as the Proton donor. Cys731 provides a ligand contact to Zn(2+).

This sequence belongs to the vitamin-B12 independent methionine synthase family. It depends on Zn(2+) as a cofactor.

It catalyses the reaction 5-methyltetrahydropteroyltri-L-glutamate + L-homocysteine = tetrahydropteroyltri-L-glutamate + L-methionine. Its pathway is amino-acid biosynthesis; L-methionine biosynthesis via de novo pathway; L-methionine from L-homocysteine (MetE route): step 1/1. In terms of biological role, catalyzes the transfer of a methyl group from 5-methyltetrahydrofolate to homocysteine resulting in methionine formation. This Shewanella oneidensis (strain ATCC 700550 / JCM 31522 / CIP 106686 / LMG 19005 / NCIMB 14063 / MR-1) protein is 5-methyltetrahydropteroyltriglutamate--homocysteine methyltransferase.